A 368-amino-acid polypeptide reads, in one-letter code: 2-aminoethylphosphonate--pyruvate transaminase (368 aa).

The residue at position 192 (lysine 192) is an N6-(pyridoxal phosphate)lysine.

Belongs to the class-V pyridoxal-phosphate-dependent aminotransferase family. PhnW subfamily. In terms of assembly, homodimer. Pyridoxal 5'-phosphate serves as cofactor.

It catalyses the reaction (2-aminoethyl)phosphonate + pyruvate = phosphonoacetaldehyde + L-alanine. In terms of biological role, involved in phosphonate degradation. The polypeptide is 2-aminoethylphosphonate--pyruvate transaminase (Pseudomonas putida (strain GB-1)).